A 704-amino-acid chain; its full sequence is Elongation factor G (704 aa).

The tr-type G domain occupies 8-290 (ARYRNIGISA…AVIEYLPAPT (283 aa)). GTP-binding positions include 17–24 (AHIDAGKT), 88–92 (DTPGH), and 142–145 (NKMD).

This sequence belongs to the TRAFAC class translation factor GTPase superfamily. Classic translation factor GTPase family. EF-G/EF-2 subfamily.

The protein localises to the cytoplasm. Its function is as follows. Catalyzes the GTP-dependent ribosomal translocation step during translation elongation. During this step, the ribosome changes from the pre-translocational (PRE) to the post-translocational (POST) state as the newly formed A-site-bound peptidyl-tRNA and P-site-bound deacylated tRNA move to the P and E sites, respectively. Catalyzes the coordinated movement of the two tRNA molecules, the mRNA and conformational changes in the ribosome. This Proteus mirabilis (strain HI4320) protein is Elongation factor G.